We begin with the raw amino-acid sequence, 533 residues long: CEP295 N-terminal-like protein (533 aa).

Disordered stretches follow at residues 1–40, 84–176, 286–333, and 370–399; these read MQRD…TTLQ, RSMG…RVTR, LKAD…ETTE, and AGTS…LEDE. Residues 40–72 adopt a coiled-coil conformation; the sequence is QQWKARQLQRLAEELKAEWQEARLQQVRQAERL. The span at 107-126 shows a compositional bias: basic and acidic residues; sequence KERNRAAFREERGRREEHPR. Positions 416 to 531 form a coiled coil; sequence MALRQKQKAE…ARKRLQEFQK (116 aa).

Expressed in mature spermatozoa (at protein level). Detected in retina, lung and kidney. In brain, highly expressed in brain-stem, cerebral cortex and thalamus with lesser expression in cerebellum and hippocampus.

The protein resides in the cell projection. It is found in the cilium. This chain is CEP295 N-terminal-like protein, found in Mus musculus (Mouse).